A 581-amino-acid chain; its full sequence is Pre-mRNA 3'-end-processing factor FIP1 (581 aa).

Basic and acidic residues-rich tracts occupy residues M1–V10 and V32–L42. Disordered stretches follow at residues M1–V95, T211–D282, and R320–E581. A sufficient for interaction with PAPOLA region spans residues M1–G110. The interval M1–P332 is necessary for stimulating PAPOLA activity. Acidic residues-rich tracts occupy residues D43 to N54 and T80 to D94. 3 positions are modified to phosphoserine: S84, S86, and S88. A sufficient for interaction with CPSF4 region spans residues K136–N219. Low complexity predominate over residues S247 to S267. Residues W271 to D282 are compositionally biased toward basic and acidic residues. S280 carries the phosphoserine modification. The segment covering R320–S330 has biased composition (polar residues). Positions K331 to L389 are enriched in pro residues. A Phosphotyrosine modification is found at Y411. The segment covering L419–Q435 has biased composition (polar residues). Residues S428 to E581 are sufficient for interaction with CPSF1 and CSTF3. Positions Y439 to S479 are enriched in basic and acidic residues. Residues R442 to D477 form an arg/Asp/Glu-rich domain region. Positions H478 to S535 are sufficient for interaction with AHCYL1. Residue S479 is modified to Phosphoserine. A Phosphothreonine modification is found at T481. 2 positions are modified to phosphoserine: S483 and S487. The span at D488 to H515 shows a compositional bias: basic and acidic residues. The span at K529 to R538 shows a compositional bias: basic residues. S541 bears the Phosphoserine mark. Positions H547 to R557 are enriched in basic residues.

It belongs to the FIP1 family. In terms of assembly, component of the cleavage and polyadenylation specificity factor (CPSF) complex, composed of CPSF1, CPSF2, CPSF3, CPSF4 and FIP1L1. Found in a complex with CPSF1, FIP1L1 and PAPOLA. Interacts with CPSF1, CPSF4, CSTF2 and CSTF3. Interacts with AHCYL1 (when phosphorylated); the interaction is direct and associates AHCYL1 with the CPSF complex and RNA. Interacts with PAPOLA; the interaction seems to be increased by the interaction with AHCYL1. Interacts with NUDT21/CPSF5; this interaction occurs in a RNA sequence-specific manner. Interacts (preferentially via unphosphorylated form and Arg/Glu/Asp-rich domain) with CPSF6 (via Arg/Ser-rich domain); this interaction mediates, at least in part, the interaction between the CFIm and CPSF complexes and may be inhibited by CPSF6 hyper-phosphorylation. Interacts (preferentially via unphosphorylated form and Arg/Asp/Glu-rich domain) with CPSF7 (via Arg/Ser-rich domain); this interaction mediates, at least in part, the interaction between the CFIm and CPSF complexes and may be inhibited by CPSF7 hyper-phosphorylation.

The protein localises to the nucleus. Its function is as follows. Component of the cleavage and polyadenylation specificity factor (CPSF) complex that plays a key role in pre-mRNA 3'-end formation, recognizing the AAUAAA signal sequence and interacting with poly(A) polymerase and other factors to bring about cleavage and poly(A) addition. FIP1L1 contributes to poly(A) site recognition and stimulates poly(A) addition. Binds to U-rich RNA sequence elements surrounding the poly(A) site. May act to tether poly(A) polymerase to the CPSF complex. This is Pre-mRNA 3'-end-processing factor FIP1 (Fip1l1) from Mus musculus (Mouse).